Here is a 157-residue protein sequence, read N- to C-terminus: 2-C-methyl-D-erythritol 2,4-cyclodiphosphate synthase (157 aa).

Positions 8 and 10 each coordinate a divalent metal cation. 4-CDP-2-C-methyl-D-erythritol 2-phosphate is bound by residues 8 to 10 (DVH) and 34 to 35 (HS). Histidine 42 lines the a divalent metal cation pocket. 4-CDP-2-C-methyl-D-erythritol 2-phosphate-binding positions include 56 to 58 (DIG), 132 to 135 (TTNE), and arginine 142.

This sequence belongs to the IspF family. In terms of assembly, homotrimer. The cofactor is a divalent metal cation.

It catalyses the reaction 4-CDP-2-C-methyl-D-erythritol 2-phosphate = 2-C-methyl-D-erythritol 2,4-cyclic diphosphate + CMP. Its pathway is isoprenoid biosynthesis; isopentenyl diphosphate biosynthesis via DXP pathway; isopentenyl diphosphate from 1-deoxy-D-xylulose 5-phosphate: step 4/6. Functionally, involved in the biosynthesis of isopentenyl diphosphate (IPP) and dimethylallyl diphosphate (DMAPP), two major building blocks of isoprenoid compounds. Catalyzes the conversion of 4-diphosphocytidyl-2-C-methyl-D-erythritol 2-phosphate (CDP-ME2P) to 2-C-methyl-D-erythritol 2,4-cyclodiphosphate (ME-CPP) with a corresponding release of cytidine 5-monophosphate (CMP). This is 2-C-methyl-D-erythritol 2,4-cyclodiphosphate synthase from Pelodictyon phaeoclathratiforme (strain DSM 5477 / BU-1).